Consider the following 1117-residue polypeptide: PR domain zinc finger protein 10 (1117 aa).

Residues 97–142 (QQTPLGGLEAKEEEDEDEDEDTEEDEEEDGEDADLDDWEPDPPRPF) are disordered. Positions 107 to 136 (KEEEDEDEDEDTEEDEEEDGEDADLDDWEP) are enriched in acidic residues. In terms of domain architecture, SET spans 182–300 (LPLVLYIDRF…PKQELKVWYA (119 aa)). The interval 201-305 (IPKRTQLGPV…KVWYAASYAE (105 aa)) is N-terminal PR domain; essential for transcriptional activator activity. The C2H2-type 1 zinc-finger motif lies at 329–351 (WPCYECNRRFISSEQLQQHLNSH). Residue Lys354 forms a Glycyl lysine isopeptide (Lys-Gly) (interchain with G-Cter in SUMO2) linkage. The span at 361 to 381 (TRGRGRGRGKRRFGPGRRPGR) shows a compositional bias: basic residues. The tract at residues 361–386 (TRGRGRGRGKRRFGPGRRPGRPPKFI) is disordered. Residue Ser398 is modified to Phosphoserine. Thr402 carries the post-translational modification Phosphothreonine. Positions 440–474 (QETQSSLEHEPETHTLHLQPQHEESVVPTQSTLTA) are disordered. A compositionally biased stretch (basic and acidic residues) spans 446–464 (LEHEPETHTLHLQPQHEES). 9 consecutive C2H2-type zinc fingers follow at residues 500–522 (FKCL…LRFH), 530–552 (LTCD…MKLH), 558–580 (YSCI…VAIH), 586–609 (FTCP…RSFH), 614–636 (YQCT…MLRH), 642–665 (FLCS…QRMH), 697–720 (FKCR…SKRH), 742–765 (YFCQ…LKNH), and 804–827 (VCCP…RKKH). The tract at residues 871–1097 (QAMTELSQTL…QTTSQQQTTQ (227 aa)) is C-terminal glutamine-rich region; essential for transcriptional activator activity. 3 disordered regions span residues 919–943 (VAPA…DPQP), 958–1001 (GQPL…SSVQ), and 1066–1094 (QTSA…SQQQ). The segment covering 924-934 (SPHQSQQSTVD) has biased composition (polar residues).

It belongs to the class V-like SAM-binding methyltransferase superfamily.

Its subcellular location is the nucleus. Transcriptional activator, essential for early embryonic development and survival of embryonic stem cells (ESCs). Supports cell growth and survival during early development by transcriptionally activating the expression of the translation initiation factor EIF3B, to sustain global translation. Activates the transcription of FLNC. This chain is PR domain zinc finger protein 10 (PRDM10), found in Pongo abelii (Sumatran orangutan).